A 105-amino-acid chain; its full sequence is Replication restart protein PriB (105 aa).

One can recognise an SSB domain in the interval M1–D102.

Belongs to the PriB family. In terms of assembly, homodimer. Interacts with PriA and DnaT. Component of the replication restart primosome. Primosome assembly occurs via a 'hand-off' mechanism. PriA binds to replication forks, subsequently PriB then DnaT bind; DnaT then displaces ssDNA to generate the helicase loading substrate.

Involved in the restart of stalled replication forks, which reloads the replicative helicase on sites other than the origin of replication; the PriA-PriB pathway is the major replication restart pathway. During primosome assembly it facilitates complex formation between PriA and DnaT on DNA; stabilizes PriA on DNA. Stimulates the DNA unwinding activity of PriA helicase. This Photorhabdus laumondii subsp. laumondii (strain DSM 15139 / CIP 105565 / TT01) (Photorhabdus luminescens subsp. laumondii) protein is Replication restart protein PriB.